Here is a 1035-residue protein sequence, read N- to C-terminus: Sialidase A (1035 aa).

The first 53 residues, 1–53 (MSYFRNRDIDIERNSMNRSVQERKCRYSIRKLSVGAVSMIVGAVVFGTSPVLA), serve as a signal peptide directing secretion. The tract at residues 57 to 112 (ASEQPLANETQLSGESSTLTDTEKSQPSSETELSGNKQEQERKDKQEEKIPRDYYA) is disordered. Residues 61 to 92 (PLANETQLSGESSTLTDTEKSQPSSETELSGN) are compositionally biased toward polar residues. The segment covering 94–112 (QEQERKDKQEEKIPRDYYA) has biased composition (basic and acidic residues). Arg347 is a binding site for substrate. The active-site Proton acceptor is the Asp372. BNR repeat units lie at residues 381 to 392 (RRSEDNGKTWGD), 539 to 550 (SYSDDDGKTWSA), and 607 to 618 (IYSDDHGKTWHA). Glu647 is a catalytic residue. Arg663 is a binding site for substrate. A BNR 4 repeat occupies 672 to 683 (ATSKDGGVTWEK). The disordered stretch occupies residues 902-951 (GPLGTSGEEPAPTVEKPEYTGPLGTSGEEPAPTVEKPEYTGPLGTAGEEA). Residues 1003–1007 (LPETG) carry the LPXTG sorting signal motif. Thr1006 is subject to Pentaglycyl murein peptidoglycan amidated threonine. The propeptide at 1007–1035 (GNKESDLLASLGLTAFFLGLFTLGKKREQ) is removed by sortase.

Belongs to the glycosyl hydrolase 33 family.

It is found in the secreted. Its subcellular location is the cell wall. The enzyme catalyses Hydrolysis of alpha-(2-&gt;3)-, alpha-(2-&gt;6)-, alpha-(2-&gt;8)- glycosidic linkages of terminal sialic acid residues in oligosaccharides, glycoproteins, glycolipids, colominic acid and synthetic substrates.. This Streptococcus pneumoniae protein is Sialidase A (nanA).